Reading from the N-terminus, the 341-residue chain is Phosphoribosylformylglycinamidine cyclo-ligase (341 aa).

Belongs to the AIR synthase family.

The protein localises to the cytoplasm. It catalyses the reaction 2-formamido-N(1)-(5-O-phospho-beta-D-ribosyl)acetamidine + ATP = 5-amino-1-(5-phospho-beta-D-ribosyl)imidazole + ADP + phosphate + H(+). The protein operates within purine metabolism; IMP biosynthesis via de novo pathway; 5-amino-1-(5-phospho-D-ribosyl)imidazole from N(2)-formyl-N(1)-(5-phospho-D-ribosyl)glycinamide: step 2/2. This chain is Phosphoribosylformylglycinamidine cyclo-ligase, found in Xanthomonas campestris pv. campestris (strain B100).